We begin with the raw amino-acid sequence, 238 residues long: Probable transcriptional regulatory protein YcdB (238 aa).

Belongs to the TACO1 family. YeeN subfamily.

It is found in the cytoplasm. This Lactococcus lactis subsp. lactis (strain IL1403) (Streptococcus lactis) protein is Probable transcriptional regulatory protein YcdB (ycdB).